The following is a 956-amino-acid chain: Nitrogen regulatory protein NUT1 (956 aa).

The span at 1 to 12 (MNPTITEHDFRF) shows a compositional bias: basic and acidic residues. 5 disordered regions span residues 1–51 (MNPT…NDAQ), 120–222 (QQEE…PAAA), 240–262 (KTSI…FQVP), 348–373 (GQSI…SQVS), and 524–661 (TLPG…DAPT). Low complexity predominate over residues 15 to 37 (RPAAPGRDPGSDSSDDPLPASLR). Composition is skewed to polar residues over residues 42–51 (DRQSAFNDAQ), 131–153 (PLKT…QKKS), 167–194 (SHGS…NAIS), and 208–217 (AAQSQFNPQS). The span at 588–613 (NASTTAIPNSQMQYEQQGVQGHTNSP) shows a compositional bias: polar residues. 2 stretches are compositionally biased toward low complexity: residues 623–633 (SGFSSVVHSRP) and 640–661 (SKNG…DAPT). Residues 663 to 687 (CTNCATQTTPLWRRNPEGQPLCNAC) form a GATA-type zinc finger. Positions 708–890 (KKRNRGSGSN…AATRPSGFGT (183 aa)) are disordered. The span at 713–760 (GSGSNVPGATSGSRSKKGATSTAVSGTNTRKNSSLAISRTASTTNVQV) shows a compositional bias: polar residues. The segment covering 812-839 (VVPIAAAPPKNMPGPGAAAAARTVALGP) has biased composition (low complexity). Composition is skewed to polar residues over residues 849 to 863 (SPAN…NANH) and 872 to 881 (PENSTGSNEA).

The protein resides in the nucleus. Functionally, major nitrogen regulatory protein; activates expression of nitrogen-regulated genes. The chain is Nitrogen regulatory protein NUT1 (NUT1) from Pyricularia oryzae (strain 70-15 / ATCC MYA-4617 / FGSC 8958) (Rice blast fungus).